A 209-amino-acid chain; its full sequence is uncharacterized protein (209 aa).

An MPN domain is found at 1 to 67; the sequence is MEILPKYKPE…LIMYNYWTID (67 aa). The Zn(2+) site is built by histidine 17, histidine 19, and aspartate 30. Residues 17–30 carry the JAMM motif motif; sequence HTHPKGPAEPSIND.

This is an uncharacterized protein from Acidianus convivator (ATV).